We begin with the raw amino-acid sequence, 410 residues long: Platelet-activating factor acetylhydrolase IB subunit alpha (410 aa).

A required for self-association and interaction with PAFAH1B2 and PAFAH1B3 region spans residues 1–38; the sequence is MVLSQRQRDELNRAIADYLRSNGYEEAYSVFKKEAELD. Residues 1 to 66 are interaction with NDE1; it reads MVLSQRQRDE…SVIRLQKKVM (66 aa). Residues 1 to 102 are interaction with NDEL1; it reads MVLSQRQRDE…EWIPRPPEKY (102 aa). In terms of domain architecture, LisH spans 7–39; that stretch reads QRDELNRAIADYLRSNGYEEAYSVFKKEAELDM. Lys53 carries the N6-acetyllysine modification. Residues 56–82 are a coiled coil; that stretch reads TSVIRLQKKVMELESKLNEAKEEFTSG. An interaction with dynein and dynactin region spans residues 83 to 410; the sequence is GPLGQKRDPK…DQTVKVWECR (328 aa). 7 WD repeats span residues 106 to 147, 148 to 187, 190 to 229, 232 to 271, 274 to 333, 336 to 377, and 378 to 410; these read GHRS…RTLK, GHTD…CIRT, GHDH…CVKT, GHRE…CKAE, EHEH…CLMT, GHDN…KTLN, and AHEH…WECR. Ser109 carries the phosphoserine modification. Residues 367-409 form an interaction with DCX region; the sequence is YKNKRCMKTLNAHEHFVTSLDFHKTAPYVVTGSVDQTVKVWEC. The interval 388 to 410 is interaction with NDEL1; sequence FHKTAPYVVTGSVDQTVKVWECR.

It belongs to the WD repeat LIS1/nudF family. In terms of assembly, can self-associate. Component of the cytosolic PAF-AH (I) heterotetrameric enzyme, which is composed of PAFAH1B1 (beta), PAFAH1B2 (alpha2) and PAFAH1B3 (alpha1) subunits. The catalytic activity of the enzyme resides in the alpha1 (PAFAH1B3) and alpha2 (PAFAH1B2) subunits, whereas the beta subunit (PAFAH1B1) has regulatory activity. Trimer formation is not essential for the catalytic activity. Interacts with the catalytic dimer of PAF-AH (I) heterotetrameric enzyme: interacts with PAFAH1B2 homodimer (alpha2/alpha2 homodimer), PAFAH1B3 homodimer (alpha1/alpha1 homodimer) and PAFAH1B2-PAFAH1B3 heterodimer (alpha2/alpha1 heterodimer). Interacts with DCX, dynein, dynactin, IQGAP1, KATNB1, NDE1, NDEL1, NUDC and RSN. Interacts with DISC1, and this interaction is enhanced by NDEL1. Interacts with DAB1 when DAB1 is phosphorylated in response to RELN/reelin signaling. Interacts with INTS13. Interacts with DCDC1.

It localises to the cytoplasm. The protein localises to the cytoskeleton. The protein resides in the microtubule organizing center. It is found in the centrosome. Its subcellular location is the spindle. It localises to the nucleus membrane. In terms of biological role, regulatory subunit (beta subunit) of the cytosolic type I platelet-activating factor (PAF) acetylhydrolase (PAF-AH (I)), an enzyme that catalyzes the hydrolyze of the acetyl group at the sn-2 position of PAF and its analogs and participates in PAF inactivation. Regulates the PAF-AH (I) activity in a catalytic dimer composition-dependent manner. Positively regulates the activity of the minus-end directed microtubule motor protein dynein. May enhance dynein-mediated microtubule sliding by targeting dynein to the microtubule plus end. Required for several dynein- and microtubule-dependent processes such as the maintenance of Golgi integrity, the peripheral transport of microtubule fragments and the coupling of the nucleus and centrosome. Required during brain development for the proliferation of neuronal precursors and the migration of newly formed neurons from the ventricular/subventricular zone toward the cortical plate. Neuronal migration involves a process called nucleokinesis, whereby migrating cells extend an anterior process into which the nucleus subsequently translocates. During nucleokinesis dynein at the nuclear surface may translocate the nucleus towards the centrosome by exerting force on centrosomal microtubules. Also required for proper activation of Rho GTPases and actin polymerization at the leading edge of locomoting cerebellar neurons and postmigratory hippocampal neurons in response to calcium influx triggered via NMDA receptors. May also play a role in other forms of cell locomotion including the migration of fibroblasts during wound healing. Required for dynein recruitment to microtubule plus ends and BICD2-bound cargos. May modulate the Reelin pathway through interaction of the PAF-AH (I) catalytic dimer with VLDLR. The protein is Platelet-activating factor acetylhydrolase IB subunit alpha of Sus scrofa (Pig).